The primary structure comprises 388 residues: Succinate--CoA ligase [ADP-forming] subunit beta (388 aa).

An ATP-grasp domain is found at 9-244; that stretch reads KEILRKFGVA…PDEEDPKETQ (236 aa). ATP is bound by residues Lys46, 53-55, Glu99, Cys102, and Glu107; that span reads GRG. Positions 199 and 213 each coordinate Mg(2+). Residues Asn264 and 321-323 contribute to the substrate site; that span reads GIM.

The protein belongs to the succinate/malate CoA ligase beta subunit family. Heterotetramer of two alpha and two beta subunits. It depends on Mg(2+) as a cofactor.

It catalyses the reaction succinate + ATP + CoA = succinyl-CoA + ADP + phosphate. The catalysed reaction is GTP + succinate + CoA = succinyl-CoA + GDP + phosphate. It participates in carbohydrate metabolism; tricarboxylic acid cycle; succinate from succinyl-CoA (ligase route): step 1/1. Functionally, succinyl-CoA synthetase functions in the citric acid cycle (TCA), coupling the hydrolysis of succinyl-CoA to the synthesis of either ATP or GTP and thus represents the only step of substrate-level phosphorylation in the TCA. The beta subunit provides nucleotide specificity of the enzyme and binds the substrate succinate, while the binding sites for coenzyme A and phosphate are found in the alpha subunit. This chain is Succinate--CoA ligase [ADP-forming] subunit beta, found in Anaeromyxobacter dehalogenans (strain 2CP-C).